A 158-amino-acid chain; its full sequence is Transcription elongation factor GreA (158 aa).

Residues 47-68 are a coiled coil; it reads AEYDAAKEAQGLLELKIKKMEE.

This sequence belongs to the GreA/GreB family.

In terms of biological role, necessary for efficient RNA polymerase transcription elongation past template-encoded arresting sites. The arresting sites in DNA have the property of trapping a certain fraction of elongating RNA polymerases that pass through, resulting in locked ternary complexes. Cleavage of the nascent transcript by cleavage factors such as GreA or GreB allows the resumption of elongation from the new 3'terminus. GreA releases sequences of 2 to 3 nucleotides. This Flavobacterium psychrophilum (strain ATCC 49511 / DSM 21280 / CIP 103535 / JIP02/86) protein is Transcription elongation factor GreA.